Here is a 463-residue protein sequence, read N- to C-terminus: Chromosomal replication initiator protein DnaA (463 aa).

Residues 1-83 (MSTNQIILTD…LQLFQHYNNT (83 aa)) are domain I, interacts with DnaA modulators. The domain II stretch occupies residues 83 to 124 (TIKSIEIITKELPGTTQTVTELPTKTFADIGSSELNSENIFS). The tract at residues 125–343 (TLDVRFTFDN…GALNKVIAHS (219 aa)) is domain III, AAA+ region. Gly-171, Gly-173, Lys-174, and Thr-175 together coordinate ATP. The tract at residues 344–463 (NFTLKEITLE…INLLMKILQN (120 aa)) is domain IV, binds dsDNA.

This sequence belongs to the DnaA family. In terms of assembly, oligomerizes as a right-handed, spiral filament on DNA at oriC.

Its subcellular location is the cytoplasm. Plays an essential role in the initiation and regulation of chromosomal replication. ATP-DnaA binds to the origin of replication (oriC) to initiate formation of the DNA replication initiation complex once per cell cycle. Binds the DnaA box (a 9 base pair repeat at the origin) and separates the double-stranded (ds)DNA. Forms a right-handed helical filament on oriC DNA; dsDNA binds to the exterior of the filament while single-stranded (ss)DNA is stabiized in the filament's interior. The ATP-DnaA-oriC complex binds and stabilizes one strand of the AT-rich DNA unwinding element (DUE), permitting loading of DNA polymerase. After initiation quickly degrades to an ADP-DnaA complex that is not apt for DNA replication. Binds acidic phospholipids. The polypeptide is Chromosomal replication initiator protein DnaA (Rickettsia conorii (strain ATCC VR-613 / Malish 7)).